A 235-amino-acid chain; its full sequence is Sugar fermentation stimulation protein homolog (235 aa).

This sequence belongs to the SfsA family.

This chain is Sugar fermentation stimulation protein homolog, found in Ectopseudomonas mendocina (strain ymp) (Pseudomonas mendocina).